Reading from the N-terminus, the 374-residue chain is Eukaryotic translation initiation factor 3 subunit M (374 aa).

Residues 180–339 (TAAKVMVELL…RKVVVSHSTH (160 aa)) form the PCI domain.

It belongs to the eIF-3 subunit M family. In terms of assembly, component of the eukaryotic translation initiation factor 3 (eIF-3) complex, which is composed of 13 subunits: EIF3A, EIF3B, EIF3C, EIF3D, EIF3E, EIF3F, EIF3G, EIF3H, EIF3I, EIF3J, EIF3K, EIF3L and EIF3M.

The protein resides in the cytoplasm. Functionally, component of the eukaryotic translation initiation factor 3 (eIF-3) complex, which is involved in protein synthesis of a specialized repertoire of mRNAs and, together with other initiation factors, stimulates binding of mRNA and methionyl-tRNAi to the 40S ribosome. The eIF-3 complex specifically targets and initiates translation of a subset of mRNAs involved in cell proliferation. The protein is Eukaryotic translation initiation factor 3 subunit M of Gallus gallus (Chicken).